The sequence spans 213 residues: Ribosomal RNA large subunit methyltransferase E (213 aa).

Residues Gly-60, Trp-62, Asp-80, Asp-96, and Asp-121 each coordinate S-adenosyl-L-methionine. Catalysis depends on Lys-161, which acts as the Proton acceptor.

This sequence belongs to the class I-like SAM-binding methyltransferase superfamily. RNA methyltransferase RlmE family.

The protein resides in the cytoplasm. The catalysed reaction is uridine(2552) in 23S rRNA + S-adenosyl-L-methionine = 2'-O-methyluridine(2552) in 23S rRNA + S-adenosyl-L-homocysteine + H(+). In terms of biological role, specifically methylates the uridine in position 2552 of 23S rRNA at the 2'-O position of the ribose in the fully assembled 50S ribosomal subunit. This is Ribosomal RNA large subunit methyltransferase E from Xylella fastidiosa (strain 9a5c).